The chain runs to 470 residues: 6-phosphofructo-2-kinase/fructose-2,6-bisphosphatase (470 aa).

The segment at 1–249 (MAAVASGQLT…VYYLMNTHVT (249 aa)) is 6-phosphofructo-2-kinase. Ser31 carries the post-translational modification Phosphoserine; by PKA. 47-55 (GLRRPGKTY) lines the ATP pocket. Beta-D-fructose 6-phosphate-binding residues include Arg80 and Arg104. Asp130 is a catalytic residue. The beta-D-fructose 6-phosphate site is built by Thr132 and Arg138. Cys160 is a catalytic residue. 169–174 (NIKQVK) is a binding site for ATP. Positions 174, 195, and 199 each coordinate beta-D-fructose 6-phosphate. Positions 250–469 (PRAIYLSRHG…AEALVTVPEH (220 aa)) are fructose-2,6-bisphosphatase. Residue Arg257 coordinates beta-D-fructose 2,6-bisphosphate. His258 functions as the Tele-phosphohistidine intermediate in the catalytic mechanism. Residues Asn264 and Gly270 each contribute to the beta-D-fructose 2,6-bisphosphate site. Glu327 acts as the Proton donor/acceptor in catalysis. 6 residues coordinate beta-D-fructose 2,6-bisphosphate: Tyr338, Arg352, Lys356, Tyr367, Gln393, and Arg397. 349 to 352 (FALR) serves as a coordination point for ATP. Residues 393–397 (QAVMR) and Tyr429 each bind ATP.

It in the C-terminal section; belongs to the phosphoglycerate mutase family. Homodimer. Liver.

It catalyses the reaction beta-D-fructose 2,6-bisphosphate + H2O = beta-D-fructose 6-phosphate + phosphate. The catalysed reaction is beta-D-fructose 6-phosphate + ATP = beta-D-fructose 2,6-bisphosphate + ADP + H(+). With respect to regulation, phosphorylation results in inhibition of the kinase activity. In terms of biological role, synthesis and degradation of fructose 2,6-bisphosphate. The protein is 6-phosphofructo-2-kinase/fructose-2,6-bisphosphatase of Gallus gallus (Chicken).